We begin with the raw amino-acid sequence, 113 residues long: Class I hydrophobin fvh1 (113 aa).

The signal sequence occupies residues 1–20 (MVSFRAFTVAASLFATLAAA). 4 disulfides stabilise this stretch: C34-C94, C41-C88, C42-C75, and C95-C108. N35 carries an N-linked (GlcNAc...) asparagine glycan. An N-linked (GlcNAc...) asparagine glycan is attached at N97.

This sequence belongs to the fungal hydrophobin family. In terms of assembly, self-assembles to form functional amyloid fibrils called rodlets. Self-assembly into fibrillar rodlets occurs spontaneously at hydrophobic:hydrophilic interfaces and the rodlets further associate laterally to form amphipathic monolayers.

It is found in the secreted. The protein localises to the cell wall. Functionally, aerial growth, conidiation, and dispersal of filamentous fungi in the environment rely upon a capability of their secreting small amphipathic proteins called hydrophobins (HPBs) with low sequence identity. Class I can self-assemble into an outermost layer of rodlet bundles on aerial cell surfaces, conferring cellular hydrophobicity that supports fungal growth, development and dispersal; whereas Class II form highly ordered films at water-air interfaces through intermolecular interactions but contribute nothing to the rodlet structure. Fvh1 is a class I hydrophobin involved in fruiting body initiation. This Flammulina velutipes (Agaricus velutipes) protein is Class I hydrophobin fvh1.